Reading from the N-terminus, the 144-residue chain is MSTAYEEYMRQLVLPMRQELVQAGFKELTTAEEVETFMEDAEGTTFVVVNSVCGCAAGLARPAAVQAVSGSEKGPDETVTVFAGQDREATAKMREYFEGYEPSSPSMALLKGKEVVHFIPREQIEGREMTEIMKNITDAFEKHC.

The protein belongs to the bacilliredoxin family.

The polypeptide is Bacilliredoxin BLi02323/BL05224 (Bacillus licheniformis (strain ATCC 14580 / DSM 13 / JCM 2505 / CCUG 7422 / NBRC 12200 / NCIMB 9375 / NCTC 10341 / NRRL NRS-1264 / Gibson 46)).